Consider the following 376-residue polypeptide: N-acetyldiaminopimelate deacetylase (376 aa).

Asp-69 is a catalytic residue. Glu-128 functions as the Proton acceptor in the catalytic mechanism.

The protein belongs to the peptidase M20A family. N-acetyldiaminopimelate deacetylase subfamily.

The enzyme catalyses N-acetyl-(2S,6S)-2,6-diaminopimelate + H2O = (2S,6S)-2,6-diaminopimelate + acetate. It functions in the pathway amino-acid biosynthesis; L-lysine biosynthesis via DAP pathway; LL-2,6-diaminopimelate from (S)-tetrahydrodipicolinate (acetylase route): step 3/3. Functionally, catalyzes the conversion of N-acetyl-diaminopimelate to diaminopimelate and acetate. This chain is N-acetyldiaminopimelate deacetylase, found in Bacillus thuringiensis subsp. konkukian (strain 97-27).